A 266-amino-acid chain; its full sequence is Putative carbamate hydrolase RutD (266 aa).

One can recognise an AB hydrolase-1 domain in the interval 14–115; it reads PVVVLISGLG…TMLVSVNGWL (102 aa).

The protein belongs to the AB hydrolase superfamily. Hydrolase RutD family.

The enzyme catalyses carbamate + 2 H(+) = NH4(+) + CO2. Its function is as follows. Involved in pyrimidine catabolism. May facilitate the hydrolysis of carbamate, a reaction that can also occur spontaneously. The chain is Putative carbamate hydrolase RutD from Shigella flexneri serotype X (strain 2002017).